Here is a 489-residue protein sequence, read N- to C-terminus: MSNKAEKYSQLRTMIPEMRRVKHIYFVGIGGAGMGGIAEVLVNEGYKLSGSDIAQSAVTERLAQLGVTIYIGHDASQVKDVDVVVVSTAISADNPELVAAKELRIPVVRRAEMLAELMRYRHGVAVAGTHGKTTTTSLIASVYGQAERDPTFVIGGLLNSAGTNARLGHSRYLIAEADESDASFLHLQPMVSVVTNIEADHMDTYEGDLEKLKTTFVDFLHNLPFYGVAVVCIDDPIVRELIPRIGRRIVTYGFSEDADVRALDFKQTGYSCEFTVRRAGMDDLQLSVNLPGEHNVLNSLAAIAVATEDEIEDEAIITALADFQGIGRRFQQIGEFTTAKGEIKLVDDYGHHPSEVAATIKAARLGWPERRLVMIYQPHRYSRTRDLYEDFVEVLSQVDCLLMLDVYAAGEAPIPGADSRALCRSIRVRGQVEPVFVASTEQLETVLPEILQDGDLLLTQGAGSIGLLSRSLAESNLGFDSAVTDEKNA.

128–134 (GTHGKTT) is an ATP binding site.

Belongs to the MurCDEF family.

It localises to the cytoplasm. The catalysed reaction is UDP-N-acetyl-alpha-D-muramate + L-alanine + ATP = UDP-N-acetyl-alpha-D-muramoyl-L-alanine + ADP + phosphate + H(+). Its pathway is cell wall biogenesis; peptidoglycan biosynthesis. Cell wall formation. In Shewanella pealeana (strain ATCC 700345 / ANG-SQ1), this protein is UDP-N-acetylmuramate--L-alanine ligase.